The sequence spans 297 residues: N-acetylneuraminate lyase (297 aa).

Residues Ser-47 and Thr-48 each coordinate aceneuramate. The Proton donor role is filled by Tyr-137. Catalysis depends on Lys-165, which acts as the Schiff-base intermediate with substrate. Thr-167, Gly-189, Asp-191, Glu-192, and Ser-208 together coordinate aceneuramate.

The protein belongs to the DapA family. NanA subfamily. As to quaternary structure, homotetramer.

The protein resides in the cytoplasm. It catalyses the reaction aceneuramate = aldehydo-N-acetyl-D-mannosamine + pyruvate. It participates in amino-sugar metabolism; N-acetylneuraminate degradation; D-fructose 6-phosphate from N-acetylneuraminate: step 1/5. Its function is as follows. Catalyzes the reversible aldol cleavage of N-acetylneuraminic acid (sialic acid; Neu5Ac) to form pyruvate and N-acetylmannosamine (ManNAc) via a Schiff base intermediate. The protein is N-acetylneuraminate lyase of Salmonella typhimurium (strain LT2 / SGSC1412 / ATCC 700720).